A 153-amino-acid polypeptide reads, in one-letter code: Large ribosomal subunit protein uL15 (153 aa).

The tract at residues 21–41 (RGIGSGKGKTGGRGIKGQKSR) is disordered. Positions 23 to 35 (IGSGKGKTGGRGI) are enriched in gly residues.

The protein belongs to the universal ribosomal protein uL15 family. In terms of assembly, part of the 50S ribosomal subunit.

In terms of biological role, binds to the 23S rRNA. This is Large ribosomal subunit protein uL15 from Rickettsia rickettsii (strain Iowa).